The primary structure comprises 147 residues: Large ribosomal subunit protein bL9 (147 aa).

Belongs to the bacterial ribosomal protein bL9 family.

Functionally, binds to the 23S rRNA. This chain is Large ribosomal subunit protein bL9, found in Helicobacter hepaticus (strain ATCC 51449 / 3B1).